Reading from the N-terminus, the 556-residue chain is 2-methylpropanoate--CoA ligase CCL4 (556 aa).

Residues 192-200 (TSGTTSSPK), 325-330 (HGYGLT), Asp423, 435-438 (IKDR), and Lys531 contribute to the ATP site. Residues 260–325 (DSEIIYDMIK…TESLGFAVSH (66 aa)) are SBD1. The tract at residues 326-402 (GYGLTETAGL…LRGGSVMLGY (77 aa)) is SBD2.

This sequence belongs to the ATP-dependent AMP-binding enzyme family. Mostly expressed in old leaves and in cones and glandular trichomes (lupulin glands) after flowering, and, to a lower extent, in stems, young leaves and flowers.

It is found in the cytoplasm. Its subcellular location is the cytosol. It carries out the reaction 2-methylpropanoate + ATP + CoA = 2-methylpropanoyl-CoA + AMP + diphosphate. The enzyme catalyses propanoate + ATP + CoA = propanoyl-CoA + AMP + diphosphate. The catalysed reaction is butanoate + ATP + CoA = butanoyl-CoA + AMP + diphosphate. It catalyses the reaction 2-methylbutanoate + ATP + CoA = 2-methylbutanoyl-CoA + AMP + diphosphate. Its pathway is secondary metabolite biosynthesis. Functionally, involved in the biosynthesis of prenylated phenolics natural products which contribute to the bitter taste of beer and display broad biological activities. Catalyzes the ligation of CoA on 2-methylpropanoate (isobutyric acid) and 2-methylbutanoate to produce 2-methylpropanoyl-CoA and 2-methylbutanoyl-CoA, respectively. Can also use propanoate and butanoate as substrates with a lower efficiency. In Humulus lupulus (European hop), this protein is 2-methylpropanoate--CoA ligase CCL4.